We begin with the raw amino-acid sequence, 129 residues long: Large ribosomal subunit protein uL22 (129 aa).

The protein belongs to the universal ribosomal protein uL22 family. As to quaternary structure, part of the 50S ribosomal subunit.

Functionally, this protein binds specifically to 23S rRNA; its binding is stimulated by other ribosomal proteins, e.g. L4, L17, and L20. It is important during the early stages of 50S assembly. It makes multiple contacts with different domains of the 23S rRNA in the assembled 50S subunit and ribosome. The globular domain of the protein is located near the polypeptide exit tunnel on the outside of the subunit, while an extended beta-hairpin is found that lines the wall of the exit tunnel in the center of the 70S ribosome. The polypeptide is Large ribosomal subunit protein uL22 (Brucella abortus (strain 2308)).